A 307-amino-acid polypeptide reads, in one-letter code: Ornithine carbamoyltransferase (307 aa).

Residues 51-54 (STRT), Q78, R102, and 129-132 (HPCQ) contribute to the carbamoyl phosphate site. L-ornithine contacts are provided by residues N160, D220, and 224–225 (SM). Residues 260-261 (CL) and R288 each bind carbamoyl phosphate.

The protein belongs to the aspartate/ornithine carbamoyltransferase superfamily. OTCase family.

Its subcellular location is the cytoplasm. The catalysed reaction is carbamoyl phosphate + L-ornithine = L-citrulline + phosphate + H(+). It functions in the pathway amino-acid biosynthesis; L-arginine biosynthesis; L-arginine from L-ornithine and carbamoyl phosphate: step 1/3. In terms of biological role, reversibly catalyzes the transfer of the carbamoyl group from carbamoyl phosphate (CP) to the N(epsilon) atom of ornithine (ORN) to produce L-citrulline. This chain is Ornithine carbamoyltransferase (argF), found in Archaeoglobus fulgidus (strain ATCC 49558 / DSM 4304 / JCM 9628 / NBRC 100126 / VC-16).